We begin with the raw amino-acid sequence, 212 residues long: Deoxyribose-phosphate aldolase (212 aa).

The active-site Proton donor/acceptor is Asp89. Lys151 (schiff-base intermediate with acetaldehyde) is an active-site residue. Catalysis depends on Lys180, which acts as the Proton donor/acceptor.

It belongs to the DeoC/FbaB aldolase family. DeoC type 1 subfamily.

It localises to the cytoplasm. The catalysed reaction is 2-deoxy-D-ribose 5-phosphate = D-glyceraldehyde 3-phosphate + acetaldehyde. It participates in carbohydrate degradation; 2-deoxy-D-ribose 1-phosphate degradation; D-glyceraldehyde 3-phosphate and acetaldehyde from 2-deoxy-alpha-D-ribose 1-phosphate: step 2/2. In terms of biological role, catalyzes a reversible aldol reaction between acetaldehyde and D-glyceraldehyde 3-phosphate to generate 2-deoxy-D-ribose 5-phosphate. The protein is Deoxyribose-phosphate aldolase of Clostridium botulinum (strain Langeland / NCTC 10281 / Type F).